A 619-amino-acid chain; its full sequence is UvrABC system protein C (619 aa).

One can recognise a GIY-YIG domain in the interval 20 to 98 (TAPGVYRMYA…IKSLSPRYNV (79 aa)). The UVR domain maps to 207-242 (DQLGEEIMHSMQQASEALEFERAARLRDLLSSLRSM).

This sequence belongs to the UvrC family. In terms of assembly, interacts with UvrB in an incision complex.

The protein localises to the cytoplasm. The UvrABC repair system catalyzes the recognition and processing of DNA lesions. UvrC both incises the 5' and 3' sides of the lesion. The N-terminal half is responsible for the 3' incision and the C-terminal half is responsible for the 5' incision. The polypeptide is UvrABC system protein C (Xanthomonas axonopodis pv. citri (strain 306)).